The sequence spans 692 residues: Ena/VASP-like protein (692 aa).

Positions 1–112 constitute a WH1 domain; it reads MSEQSICQAR…NAMLFALNIM (112 aa). Disordered regions lie at residues 116–310, 466–518, and 531–650; these read DGGP…VQKN, SAAM…YEES, and KLRK…NDVS. 2 stretches are compositionally biased toward polar residues: residues 123–132 and 159–169; these read RQAQNIQNGP and STTVSTLQINV. Residues 214-226 show a composition bias toward low complexity; it reads SSKSTNKSSNRTS. The segment covering 231-267 has biased composition (polar residues); that stretch reads LQNSHCGSEPSTSQSSAFSPIRPSNGTVSRSIKQISL. Composition is skewed to low complexity over residues 288–310 and 466–479; these read PSLS…VQKN and SAAM…APAP. Residues 480–506 show a composition bias toward pro residues; the sequence is ASGPPPPPPPGPPPPSGGTPPPAPPLP. The EVH2 block A stretch occupies residues 522 to 542; it reads GLAAALAGAKLRKVQRPEDGS. Residues 522-689 form an EVH2 region; that stretch reads GLAAALAGAK…DAIRQELSRI (168 aa). The KLKR motif lies at 531-534; that stretch reads KLRK. The segment at 563 to 580 is EVH2 block B; it reads GGLMEEMNKLLAKRRKAA. Over residues 597 to 617 the composition is skewed to polar residues; that stretch reads EDASLSSSPVTRGPTPQNSSD. Residues 618-628 show a composition bias toward basic and acidic residues; sequence LGKKPWERSNS. Residues 655–689 form an EVH2 block C region; it reads DFDRMKQEILEEVVRELHKVKEEIIDAIRQELSRI.

It belongs to the Ena/VASP family. As to expression, during embryonic and tadpole development, expressed in the cement gland, brain, neural tube, myotome and neural placodes, including the otic, lateral line and olfactory placodes. All isoforms show similar spatial expression patterns.

The protein resides in the cytoplasm. It is found in the cytoskeleton. Its subcellular location is the stress fiber. It localises to the cell projection. The protein localises to the lamellipodium. Its function is as follows. Ena/VASP proteins are actin-associated proteins involved in a range of processes dependent on cytoskeleton remodeling and cell polarity such as axon guidance and lamellipodial and filopodial dynamics in migrating cells. Evl enhances actin nucleation and polymerization. The protein is Ena/VASP-like protein of Xenopus laevis (African clawed frog).